The following is a 696-amino-acid chain: Gametogenetin-binding protein 2 (696 aa).

Serine 360 and serine 602 each carry phosphoserine.

Interacts with isoform 1 of GGN. In terms of tissue distribution, testis-specific.

Its subcellular location is the cytoplasmic vesicle. In terms of biological role, may be involved in spermatogenesis. This chain is Gametogenetin-binding protein 2 (Ggnbp2), found in Mus musculus (Mouse).